A 497-amino-acid chain; its full sequence is 4,4'-diapolycopene oxygenase (497 aa).

Belongs to the carotenoid/retinoid oxidoreductase family. FAD serves as cofactor.

The enzyme catalyses all-trans-4,4'-diapolycopene + 4 AH2 + 4 O2 = all-trans-4,4'-diapolycopene-4,4'-dial + 4 A + 6 H2O. It catalyses the reaction all-trans-4,4'-diaponeurosporene + 2 AH2 + 2 O2 = 4,4'-diaponeurosporenal + 2 A + 3 H2O. It functions in the pathway carotenoid biosynthesis. Involved in the biosynthesis of C30 carotenoids. Catalyzes the oxidation of the terminal methyl side groups of 4,4'-diapolycopene to yield 4,4'-diapolycopen-4,4'-dial via the aldehyde intermediate 4,4'-diapolycopen-al. Also able to catalyze the oxidation of the terminal methyl side group of 4,4'-diaponeurosporene to form 4,4'-diaponeurosporen-4-al. It has moderate to low activity on the C40 substrates neurosporene and lycopene, and has no detectable activity on zeta-carotene or beta-carotene. This is 4,4'-diapolycopene oxygenase from Methylomonas sp.